The sequence spans 390 residues: 1-deoxy-D-xylulose 5-phosphate reductoisomerase (390 aa).

Residues T10, G11, S12, I13, G36, R37, N38, and N121 each coordinate NADPH. Position 122 (K122) interacts with 1-deoxy-D-xylulose 5-phosphate. NADPH is bound at residue E123. D147 is a binding site for Mn(2+). 1-deoxy-D-xylulose 5-phosphate is bound by residues S148, E149, S173, and H196. E149 serves as a coordination point for Mn(2+). Residue G202 participates in NADPH binding. 4 residues coordinate 1-deoxy-D-xylulose 5-phosphate: S209, N214, K215, and E218. Position 218 (E218) interacts with Mn(2+). Positions 367–390 are disordered; it reads AASEHGRREAEKRVGARAHAPASR. Over residues 370–380 the composition is skewed to basic and acidic residues; the sequence is EHGRREAEKRV.

The protein belongs to the DXR family. It depends on Mg(2+) as a cofactor. Mn(2+) is required as a cofactor.

It catalyses the reaction 2-C-methyl-D-erythritol 4-phosphate + NADP(+) = 1-deoxy-D-xylulose 5-phosphate + NADPH + H(+). It functions in the pathway isoprenoid biosynthesis; isopentenyl diphosphate biosynthesis via DXP pathway; isopentenyl diphosphate from 1-deoxy-D-xylulose 5-phosphate: step 1/6. Its function is as follows. Catalyzes the NADPH-dependent rearrangement and reduction of 1-deoxy-D-xylulose-5-phosphate (DXP) to 2-C-methyl-D-erythritol 4-phosphate (MEP). This Anaeromyxobacter dehalogenans (strain 2CP-1 / ATCC BAA-258) protein is 1-deoxy-D-xylulose 5-phosphate reductoisomerase.